The following is an 84-amino-acid chain: Toluene-4-monooxygenase system, hydroxylase component subunit gamma (84 aa).

This sequence belongs to the TmoB/XamoB family. As to quaternary structure, the alkene monooxygenase multicomponent enzyme system is composed of an electron transfer component and a monooxygenase component interacting with the effector protein TmoD. The electron transfer component is composed of a ferredoxin reductase (TmoF) and a ferredoxin (TmoC), and the monooxygenase component is formed by a heterohexamer (dimer of heterotrimers) of two alpha subunits (TmoA), two beta subunits (TmoE) and two gamma subunits (TmoB).

The enzyme catalyses toluene + NADH + O2 + H(+) = 4-methylphenol + NAD(+) + H2O. The protein operates within xenobiotic degradation; toluene degradation. With respect to regulation, inhibited by Zn(2+) and Cu(2+). Its function is as follows. Component of the toluene-4-monooxygenase multicomponent enzyme system which catalyzes the O2- and NADH-dependent hydroxylation of toluene to form p-cresol. Also able to convert benzene to phenol, catechol, and 1,2,3-trihydroxybenzene by successive hydroxylations. In Ectopseudomonas mendocina (Pseudomonas mendocina), this protein is Toluene-4-monooxygenase system, hydroxylase component subunit gamma.